A 450-amino-acid chain; its full sequence is uncharacterized protein (450 aa).

Belongs to the ycf80 family.

It is found in the plastid. Its subcellular location is the chloroplast. This is an uncharacterized protein from Porphyra purpurea (Red seaweed).